Consider the following 383-residue polypeptide: Deoxyguanosinetriphosphate triphosphohydrolase-like protein (383 aa).

Residues 62-198 (RLTHSLEVST…ASLADDISYI (137 aa)) enclose the HD domain.

It belongs to the dGTPase family. Type 2 subfamily.

The chain is Deoxyguanosinetriphosphate triphosphohydrolase-like protein from Rickettsia prowazekii (strain Madrid E).